An 880-amino-acid polypeptide reads, in one-letter code: Probable dipeptidyl-aminopeptidase B (880 aa).

The segment covering 1 to 26 (MPRQRAPKEEEAELLTKQERSARSSE) has biased composition (basic and acidic residues). The disordered stretch occupies residues 1 to 71 (MPRQRAPKEE…KYTDEDDEAQ (71 aa)). The Cytoplasmic segment spans residues 1 to 93 (MPRQRAPKEE…PISVDKKTRR (93 aa)). A compositionally biased stretch (low complexity) spans 30–40 (DTSISSISTTS). A helical; Signal-anchor for type II membrane protein transmembrane segment spans residues 94–114 (WLWIVGIACVTGWALALVFFL). The Vacuolar portion of the chain corresponds to 115 to 880 (MSGSYKHVST…AQVDARMERR (766 aa)). N-linked (GlcNAc...) asparagine glycosylation occurs at asparagine 533. Serine 724 serves as the catalytic Charge relay system. Asparagine 778 carries N-linked (GlcNAc...) asparagine glycosylation. Active-site charge relay system residues include aspartate 801 and histidine 834.

The protein belongs to the peptidase S9B family.

It localises to the vacuole membrane. The catalysed reaction is Release of an N-terminal dipeptide, Xaa-Yaa-|-Zaa-, from a polypeptide, preferentially when Yaa is Pro, provided Zaa is neither Pro nor hydroxyproline.. Its function is as follows. Type IV dipeptidyl-peptidase which removes N-terminal dipeptides sequentially from polypeptides having unsubstituted N-termini provided that the penultimate residue is proline. This Pyrenophora tritici-repentis (strain Pt-1C-BFP) (Wheat tan spot fungus) protein is Probable dipeptidyl-aminopeptidase B (dapB).